Reading from the N-terminus, the 152-residue chain is Deoxyuridine 5'-triphosphate nucleotidohydrolase (152 aa).

Substrate is bound by residues 71–73, Asn84, 88–90, and Met98; these read RSG and LID.

It belongs to the dUTPase family. Mg(2+) serves as cofactor.

It carries out the reaction dUTP + H2O = dUMP + diphosphate + H(+). It participates in pyrimidine metabolism; dUMP biosynthesis; dUMP from dCTP (dUTP route): step 2/2. Functionally, this enzyme is involved in nucleotide metabolism: it produces dUMP, the immediate precursor of thymidine nucleotides and it decreases the intracellular concentration of dUTP so that uracil cannot be incorporated into DNA. This is Deoxyuridine 5'-triphosphate nucleotidohydrolase from Klebsiella pneumoniae subsp. pneumoniae (strain ATCC 700721 / MGH 78578).